Consider the following 37-residue polypeptide: Large ribosomal subunit protein bL36 (37 aa).

The protein belongs to the bacterial ribosomal protein bL36 family.

The sequence is that of Large ribosomal subunit protein bL36 from Maridesulfovibrio salexigens (strain ATCC 14822 / DSM 2638 / NCIMB 8403 / VKM B-1763) (Desulfovibrio salexigens).